A 280-amino-acid chain; its full sequence is Formamidopyrimidine-DNA glycosylase (280 aa).

The Schiff-base intermediate with DNA role is filled by Pro-2. Glu-3 (proton donor) is an active-site residue. Lys-58 (proton donor; for beta-elimination activity) is an active-site residue. Positions 91, 110, and 152 each coordinate DNA. Residues 237–271 (NVYGRENLPCPQCDSAIEKVVLNQRAAYFCSNCQK) form an FPG-type zinc finger. Arg-261 functions as the Proton donor; for delta-elimination activity in the catalytic mechanism.

Belongs to the FPG family. In terms of assembly, monomer. It depends on Zn(2+) as a cofactor.

It catalyses the reaction Hydrolysis of DNA containing ring-opened 7-methylguanine residues, releasing 2,6-diamino-4-hydroxy-5-(N-methyl)formamidopyrimidine.. The catalysed reaction is 2'-deoxyribonucleotide-(2'-deoxyribose 5'-phosphate)-2'-deoxyribonucleotide-DNA = a 3'-end 2'-deoxyribonucleotide-(2,3-dehydro-2,3-deoxyribose 5'-phosphate)-DNA + a 5'-end 5'-phospho-2'-deoxyribonucleoside-DNA + H(+). In terms of biological role, involved in base excision repair of DNA damaged by oxidation or by mutagenic agents. Acts as a DNA glycosylase that recognizes and removes damaged bases. Has a preference for oxidized purines, such as 7,8-dihydro-8-oxoguanine (8-oxoG). Has AP (apurinic/apyrimidinic) lyase activity and introduces nicks in the DNA strand. Cleaves the DNA backbone by beta-delta elimination to generate a single-strand break at the site of the removed base with both 3'- and 5'-phosphates. This chain is Formamidopyrimidine-DNA glycosylase, found in Hydrogenovibrio crunogenus (strain DSM 25203 / XCL-2) (Thiomicrospira crunogena).